Reading from the N-terminus, the 154-residue chain is Aspartate carbamoyltransferase regulatory chain (154 aa).

Zn(2+)-binding residues include Cys-109, Cys-114, Cys-138, and Cys-141.

Belongs to the PyrI family. As to quaternary structure, contains catalytic and regulatory chains. Requires Zn(2+) as cofactor.

In terms of biological role, involved in allosteric regulation of aspartate carbamoyltransferase. The chain is Aspartate carbamoyltransferase regulatory chain from Yersinia pestis.